Reading from the N-terminus, the 109-residue chain is Hainantoxin-XVIII-5 (109 aa).

Positions 1–18 (MKLSIIIIATSLVIAVVA) are cleaved as a signal peptide. A propeptide spanning residues 19–46 (FPSKDSKAIENDKTEQRMEIVVQETARA) is cleaved from the precursor. Cystine bridges form between Cys-47–Cys-62, Cys-55–Cys-68, Cys-59–Cys-108, and Cys-61–Cys-81.

The protein belongs to the neurotoxin 25 family. F7 subfamily. In terms of tissue distribution, expressed by the venom gland.

It localises to the secreted. In terms of biological role, putative ion channel inhibitor. The polypeptide is Hainantoxin-XVIII-5 (Cyriopagopus hainanus (Chinese bird spider)).